A 431-amino-acid chain; its full sequence is Histidinol dehydrogenase (431 aa).

3 residues coordinate NAD(+): Y127, Q189, and N212. Positions 237, 259, and 262 each coordinate substrate. Residues Q259 and H262 each coordinate Zn(2+). Catalysis depends on proton acceptor residues E326 and H327. Substrate-binding residues include H327, D360, E414, and H419. D360 serves as a coordination point for Zn(2+). H419 contacts Zn(2+).

It belongs to the histidinol dehydrogenase family. Zn(2+) serves as cofactor.

The enzyme catalyses L-histidinol + 2 NAD(+) + H2O = L-histidine + 2 NADH + 3 H(+). The protein operates within amino-acid biosynthesis; L-histidine biosynthesis; L-histidine from 5-phospho-alpha-D-ribose 1-diphosphate: step 9/9. Its function is as follows. Catalyzes the sequential NAD-dependent oxidations of L-histidinol to L-histidinaldehyde and then to L-histidine. This Xanthomonas euvesicatoria pv. vesicatoria (strain 85-10) (Xanthomonas campestris pv. vesicatoria) protein is Histidinol dehydrogenase.